Here is a 340-residue protein sequence, read N- to C-terminus: Replication factor C subunit 2 (340 aa).

59–66 (GSPGTGKT) contributes to the ATP binding site.

It belongs to the activator 1 small subunits family. Heteropentamer of subunits rfc1, rfc2, rfc3, rfc4 and rfc5 that forms a complex (RFC) with PCNA in the presence of ATP. Two other complexes exist where rfc1 can be replaced by either ctf18 or elg1 to form the ctf18-RFC or the elg1-RFC complexes respectively.

Its subcellular location is the nucleus. Its function is as follows. The elongation of primed DNA templates by DNA polymerase delta and epsilon requires the action of the accessory proteins PCNA and activator 1. Subunit 2 binds ATP and single-stranded DNA. This is Replication factor C subunit 2 (rfc2) from Schizosaccharomyces pombe (strain 972 / ATCC 24843) (Fission yeast).